The following is a 371-amino-acid chain: Lipoyl synthase, mitochondrial (371 aa).

Residues 1-24 constitute a mitochondrion transit peptide; that stretch reads MLSRFKCSRLQLQKRAISVTKATT. The span at 20–29 shows a compositional bias: polar residues; that stretch reads TKATTTTASQ. The tract at residues 20-42 is disordered; it reads TKATTTTASQPKRRRTTTFSDAL. 7 residues coordinate [4Fe-4S] cluster: C107, C112, C118, C138, C142, C145, and S353. The region spanning 121–342 is the Radical SAM core domain; sequence GGDSSKATAT…RDKALELGFL (222 aa).

This sequence belongs to the radical SAM superfamily. Lipoyl synthase family. Requires [4Fe-4S] cluster as cofactor.

Its subcellular location is the mitochondrion. It carries out the reaction [[Fe-S] cluster scaffold protein carrying a second [4Fe-4S](2+) cluster] + N(6)-octanoyl-L-lysyl-[protein] + 2 oxidized [2Fe-2S]-[ferredoxin] + 2 S-adenosyl-L-methionine + 4 H(+) = [[Fe-S] cluster scaffold protein] + N(6)-[(R)-dihydrolipoyl]-L-lysyl-[protein] + 4 Fe(3+) + 2 hydrogen sulfide + 2 5'-deoxyadenosine + 2 L-methionine + 2 reduced [2Fe-2S]-[ferredoxin]. Its pathway is protein modification; protein lipoylation via endogenous pathway; protein N(6)-(lipoyl)lysine from octanoyl-[acyl-carrier-protein]: step 2/2. In terms of biological role, catalyzes the radical-mediated insertion of two sulfur atoms into the C-6 and C-8 positions of the octanoyl moiety bound to the lipoyl domains of lipoate-dependent enzymes, thereby converting the octanoylated domains into lipoylated derivatives. In Lachancea thermotolerans (strain ATCC 56472 / CBS 6340 / NRRL Y-8284) (Yeast), this protein is Lipoyl synthase, mitochondrial.